Consider the following 422-residue polypeptide: Serine protease inhibitor A3A (422 aa).

The signal sequence occupies residues 1–17 (MAFIAALGLLMVGICPA). 3 N-linked (GlcNAc...) asparagine glycosylation sites follow: asparagine 218, asparagine 230, and asparagine 271. The RCL stretch occupies residues 369-394 (HTEADVITIARYNFQSAKIKAKIVKV).

This sequence belongs to the serpin family.

It is found in the secreted. The protein is Serine protease inhibitor A3A (Serpina3a) of Mus musculus (Mouse).